A 323-amino-acid chain; its full sequence is Porphobilinogen deaminase (323 aa).

Cys240 carries the S-(dipyrrolylmethanemethyl)cysteine modification.

The protein belongs to the HMBS family. In terms of assembly, monomer. It depends on dipyrromethane as a cofactor.

The catalysed reaction is 4 porphobilinogen + H2O = hydroxymethylbilane + 4 NH4(+). It functions in the pathway porphyrin-containing compound metabolism; protoporphyrin-IX biosynthesis; coproporphyrinogen-III from 5-aminolevulinate: step 2/4. Tetrapolymerization of the monopyrrole PBG into the hydroxymethylbilane pre-uroporphyrinogen in several discrete steps. The protein is Porphobilinogen deaminase of Sulfurovum sp. (strain NBC37-1).